The following is a 367-amino-acid chain: Ribosomal RNA large subunit methyltransferase M (367 aa).

Residues Ser189, 222 to 225, Asp241, Asp261, and Asp278 each bind S-adenosyl-L-methionine; that span reads CPGG. Lys307 (proton acceptor) is an active-site residue.

The protein belongs to the class I-like SAM-binding methyltransferase superfamily. RNA methyltransferase RlmE family. RlmM subfamily. In terms of assembly, monomer.

It is found in the cytoplasm. The catalysed reaction is cytidine(2498) in 23S rRNA + S-adenosyl-L-methionine = 2'-O-methylcytidine(2498) in 23S rRNA + S-adenosyl-L-homocysteine + H(+). In terms of biological role, catalyzes the 2'-O-methylation at nucleotide C2498 in 23S rRNA. This is Ribosomal RNA large subunit methyltransferase M from Shewanella denitrificans (strain OS217 / ATCC BAA-1090 / DSM 15013).